Reading from the N-terminus, the 216-residue chain is Uracil phosphoribosyltransferase (216 aa).

CTP is bound by residues 29–30 (RK) and arginine 37. 30-34 (KNLVR) contributes to the GTP binding site. 5-phospho-alpha-D-ribose 1-diphosphate is bound at residue arginine 80. A CTP-binding site is contributed by 87 to 96 (EGLLKAFPKA). Residues arginine 105 and 140 to 148 (DPMIATAST) each bind 5-phospho-alpha-D-ribose 1-diphosphate. Uracil-binding positions include isoleucine 203 and 208 to 210 (GDA). Residue aspartate 209 coordinates 5-phospho-alpha-D-ribose 1-diphosphate.

Belongs to the UPRTase family. As to quaternary structure, homotetramer. The cofactor is Mg(2+).

The catalysed reaction is UMP + diphosphate = 5-phospho-alpha-D-ribose 1-diphosphate + uracil. It participates in pyrimidine metabolism; UMP biosynthesis via salvage pathway; UMP from uracil: step 1/1. With respect to regulation, allosterically activated by GTP. Inhibited by CTP and UMP in combination. Its function is as follows. Catalyzes the conversion of uracil and 5-phospho-alpha-D-ribose 1-diphosphate (PRPP) to UMP and diphosphate. The chain is Uracil phosphoribosyltransferase (upp) from Saccharolobus solfataricus (strain ATCC 35092 / DSM 1617 / JCM 11322 / P2) (Sulfolobus solfataricus).